Consider the following 454-residue polypeptide: MTWRAAASTCAALLILLWALTTEGDLKVEMMAGGTQITPLNDNVTIFCNIFYSQPLNITSMGITWFWKSLTFDKEVKVFEFFGDHQEAFRPGAIVSPWRLKSGDASLRLPGIQLEEAGEYRCEVVVTPLKAQGTVQLEVVASPASRLLLDQVGMKENEDKYMCESSGFYPEAINITWEKQTQKFPHPIEISEDVITGPTIKNMDGTFNVTSCLKLNSSQEDPGTVYQCVVRHASLHTPLRSNFTLTAARHSLSETEKTDNFSIHWWPISFIGVGLVLLIVLIPWKKICNKSSSAYTPLKCILKHWNSFDTQTLKKEHLIFFCTRAWPSYQLQDGEAWPPEGSVNINTIQQLDVFCRQEGKWSEVPYVQAFFALRDNPDLCQCCRIDPALLTVTSGKSIDDNSTKSEKQTPREHSDAVPDAPILPVSPIWEPPPATTSTTPVLSSQPPTLLLPLQ.

The signal sequence occupies residues 1–24; the sequence is MTWRAAASTCAALLILLWALTTEG. Topologically, residues 25–262 are extracellular; the sequence is DLKVEMMAGG…SETEKTDNFS (238 aa). One can recognise an Ig-like V-type domain in the interval 27-138; that stretch reads KVEMMAGGTQ…LKAQGTVQLE (112 aa). N-linked (GlcNAc...) asparagine glycosylation is found at Asn43 and Asn57. Cys48 and Cys122 are joined by a disulfide. 2 interaction with NCR3 regions span residues 59–62 and 127–130; these read TSMG and TPLK. Residues 143 to 244 form the Ig-like C1-type domain; it reads PASRLLLDQV…LHTPLRSNFT (102 aa). A disulfide bridge connects residues Cys163 and Cys228. Residues Asn174, Asn208, Asn216, Asn242, and Asn260 are each glycosylated (N-linked (GlcNAc...) asparagine). The chain crosses the membrane as a helical span at residues 263–283; that stretch reads IHWWPISFIGVGLVLLIVLIP. The Cytoplasmic portion of the chain corresponds to 284–454; sequence WKKICNKSSS…QPPTLLLPLQ (171 aa). The interval 291–429 is retroviral-Gag-like; sequence SSSAYTPLKC…APILPVSPIW (139 aa). Positions 395-454 are disordered; the sequence is GKSIDDNSTKSEKQTPREHSDAVPDAPILPVSPIWEPPPATTSTTPVLSSQPPTLLLPLQ. Positions 397–416 are enriched in basic and acidic residues; that stretch reads SIDDNSTKSEKQTPREHSDA. Residues 435–454 are compositionally biased toward low complexity; that stretch reads TTSTTPVLSSQPPTLLLPLQ.

As to quaternary structure, monomer. Interacts specifically with NCR3, but not with other natural killer cell-activating receptors, including NCR1, NCR2 and KLRK1. Not detected in any normal tissue tested. Expressed at the surface of several tumor cell lines including T and B-lymphomas, myeloid leukemias, melanomas, carcinomas and large T SV40 antigen-transformed cells (at protein level).

It is found in the cell membrane. Its function is as follows. Triggers NCR3-dependent natural killer cell activation. This chain is Natural cytotoxicity triggering receptor 3 ligand 1 (NCR3LG1), found in Homo sapiens (Human).